Here is a 244-residue protein sequence, read N- to C-terminus: Phosphoribosylaminoimidazole-succinocarboxamide synthase (244 aa).

The protein belongs to the SAICAR synthetase family.

It catalyses the reaction 5-amino-1-(5-phospho-D-ribosyl)imidazole-4-carboxylate + L-aspartate + ATP = (2S)-2-[5-amino-1-(5-phospho-beta-D-ribosyl)imidazole-4-carboxamido]succinate + ADP + phosphate + 2 H(+). The protein operates within purine metabolism; IMP biosynthesis via de novo pathway; 5-amino-1-(5-phospho-D-ribosyl)imidazole-4-carboxamide from 5-amino-1-(5-phospho-D-ribosyl)imidazole-4-carboxylate: step 1/2. This is Phosphoribosylaminoimidazole-succinocarboxamide synthase from Prochlorococcus marinus (strain SARG / CCMP1375 / SS120).